Reading from the N-terminus, the 233-residue chain is Large ribosomal subunit protein uL3 (233 aa).

Residues 146–171 (GSQRASHGNSRSHRVPGSIGQAQDPG) form a disordered region. Q168 bears the N5-methylglutamine mark.

It belongs to the universal ribosomal protein uL3 family. Part of the 50S ribosomal subunit. Forms a cluster with proteins L14 and L19. Methylated by PrmB.

Functionally, one of the primary rRNA binding proteins, it binds directly near the 3'-end of the 23S rRNA, where it nucleates assembly of the 50S subunit. This chain is Large ribosomal subunit protein uL3, found in Bordetella bronchiseptica (strain ATCC BAA-588 / NCTC 13252 / RB50) (Alcaligenes bronchisepticus).